Reading from the N-terminus, the 668-residue chain is Protein brown (668 aa).

At 1-412 (MPMDEGDAQG…TEDLANIRSG (412 aa)) the chain is on the cytoplasmic side. The 298-residue stretch at 31 to 328 (YSFWNECRKQ…FTEGFMQPKN (298 aa)) folds into the ABC transporter domain. 63-70 (GGSGAGKT) contacts ATP. A helical membrane pass occupies residues 413-433 (LIGFGFFMTTAVTLSLMYSGV). The Extracellular segment spans residues 434 to 453 (GGLTQRTVQDVGGSIFMLSN). Residues 454–474 (EMIFTFSYGVTYIFPAALPII) traverse the membrane as a helical segment. At 475 to 490 (RREVAEGTYSLSAYYV) the chain is on the cytoplasmic side. The chain crosses the membrane as a helical span at residues 491–511 (ALVLSFVPVAFFKGYMFLSVI). At 512–524 (YASIYYTRGFLLY) the chain is on the extracellular side. A helical membrane pass occupies residues 525-545 (ITMGFLMSLSAIAAVGYGVFL). Over 546-561 (SSLFETDKMASECAAP) the chain is Cytoplasmic. The chain crosses the membrane as a helical span at residues 562 to 582 (FDLIFLIFGGTYMNVDSVPLL). Topologically, residues 583–637 (KYFSLFFYSNEALMYNFWIDIDNIACXVNDEHPCCQTGLEVLQQASFRTADYTFW) are extracellular. A helical membrane pass occupies residues 638–658 (LDCASLLVVALVFHIVSFTLI). The Cytoplasmic segment spans residues 659–668 (RRYINRSGYY).

This sequence belongs to the ABC transporter superfamily. ABCG family. Eye pigment precursor importer (TC 3.A.1.204) subfamily. As to quaternary structure, may form a heterodimer with w/white. As to expression, expressed in eyes.

Its subcellular location is the membrane. It carries out the reaction guanine(out) + ATP + H2O = guanine(in) + ADP + phosphate + H(+). The catalysed reaction is riboflavin(in) + ATP + H2O = riboflavin(out) + ADP + phosphate + H(+). The enzyme catalyses (6S)-5,6,7,8-tetrahydrofolate(out) + ATP + H2O = (6S)-5,6,7,8-tetrahydrofolate(in) + ADP + phosphate + H(+). In terms of biological role, ATP-dependent transporter of the ATP-binding cassette (ABC) family which transports various molecules including bioamines, neurotransmitters and metabolic intermediates. In the eye and probably in association with w/white, required for the transport of the eye red pigment precursor, guanine, into pigment cell granules. In Malpighian tubules, involved in guanine uptake. Probably in association with w/white, involved in aging-induced intestinal stem cell proliferation in the midgut by regulating tetrahydrofolate transport. The chain is Protein brown from Drosophila virilis (Fruit fly).